Here is a 46-residue protein sequence, read N- to C-terminus: Photosystem II reaction center protein K (46 aa).

Residues 1 to 9 (MIDALVLVA) constitute a propeptide that is removed on maturation. Residues 10-19 (KLPEAYAIFD) are Lumenal-facing. Residues 20-39 (PLVDVLPVIPVLFLALAFVW) form a helical membrane-spanning segment. Over 40–46 (QAAVGFR) the chain is Cytoplasmic.

The protein belongs to the PsbK family. As to quaternary structure, PSII is composed of 1 copy each of membrane proteins PsbA, PsbB, PsbC, PsbD, PsbE, PsbF, PsbH, PsbI, PsbJ, PsbK, PsbL, PsbM, PsbT, PsbX, PsbY, PsbZ, Psb30/Ycf12, peripheral proteins PsbO, CyanoQ(PsbQ), PsbU, PsbV and a large number of cofactors. It forms dimeric complexes. Part of a photosystem II (PSII) assembly intermediate complex PSII-I; crystallized from a strain deleted of psbJ, it forms monomeric PSII before addition of the oxygen evolving complex. PSII-I includes 3 assembly factors not found in mature PSII (Psb27, Psb28 and Psb34). PSII binds multiple chlorophylls, carotenoids and specific lipids. is required as a cofactor.

Its subcellular location is the cellular thylakoid membrane. Its function is as follows. One of the components of the core complex of photosystem II (PSII). PSII is a light-driven water:plastoquinone oxidoreductase that uses light energy to abstract electrons from H(2)O, generating O(2) and a proton gradient subsequently used for ATP formation. It consists of a core antenna complex that captures photons, and an electron transfer chain that converts photonic excitation into a charge separation. Required for association of PsbZ and Psb30/Ycf12 with PSII. The protein is Photosystem II reaction center protein K of Thermosynechococcus vestitus (strain NIES-2133 / IAM M-273 / BP-1).